The sequence spans 771 residues: PH and SEC7 domain-containing protein 2 (771 aa).

2 disordered regions span residues 1–67 (MEED…PDVA) and 107–136 (GDNASRSLYPDAEDPQLGLDGPGEPDVRDG). The span at 47–66 (GHERRGTPADTEEPTKDPDV) shows a compositional bias: basic and acidic residues. Ser191 is modified (phosphoserine). Disordered stretches follow at residues 207–230 (GDMGAAGGDGELGSPLRRSISSSR) and 244–307 (PNGF…ANGC). Residues 218–230 (LGSPLRRSISSSR) show a composition bias toward low complexity. Over residues 257 to 266 (GDEDDDEEDT) the composition is skewed to acidic residues. The SEC7 domain maps to 260-462 (DDDEEDTDKL…KTLYNSIKNE (203 aa)). Residues 288 to 299 (ELSSSEGLEPGS) show a composition bias toward low complexity. The PH domain maps to 512-625 (TTYKHGVLTR…WILRINLVAA (114 aa)). A helical transmembrane segment spans residues 622–639 (LVAAIFSAPAFPAAVSSM). Residues 651 to 680 (TTRLCQEEQLRSHENKLRQLTAELAEHRCH) are a coiled coil. The interval 739-771 (DDPSLRKTHSSPALSQGHVTGSKTTKDATGPDT) is disordered. Positions 748 to 761 (SSPALSQGHVTGSK) are enriched in polar residues.

It belongs to the PSD family.

It is found in the cell membrane. The protein localises to the cell projection. Its subcellular location is the ruffle membrane. The protein resides in the cleavage furrow. The polypeptide is PH and SEC7 domain-containing protein 2 (PSD2) (Homo sapiens (Human)).